A 190-amino-acid polypeptide reads, in one-letter code: Secretory phospholipase A2 (190 aa).

An N-terminal signal peptide occupies residues 1–15; the sequence is MKLAYFSSLLPLALA. Cysteine 62 and cysteine 78 are oxidised to a cystine. Alanine 65 is a Ca(2+) binding site. Histidine 81 is an active-site residue. Aspartate 82 lines the Ca(2+) pocket.

It belongs to the phospholipase A2 family. The cofactor is Ca(2+).

It is found in the lipid droplet. It localises to the secreted. The catalysed reaction is a 1,2-diacyl-sn-glycero-3-phosphocholine + H2O = a 1-acyl-sn-glycero-3-phosphocholine + a fatty acid + H(+). In terms of biological role, secretory phospholipase that catalyzes the calcium-dependent hydrolysis of the 2-acyl groups in 3-sn-phosphoglycerides. Increases the ability to utilize insect-derived nutrients and lipids, and promotes lipid dropplets accumulation. Plays a role in virulence, including more efficient penetration of the insect cuticle and evasion of host immune response by repressing the expression of host immunity genes. The chain is Secretory phospholipase A2 from Beauveria bassiana (strain ARSEF 2860) (White muscardine disease fungus).